Consider the following 258-residue polypeptide: Putative [LysW]-aminoadipate/[LysW]-glutamate kinase (258 aa).

Residues 33-34, Arg-60, and Asn-164 contribute to the substrate site; that span reads GG.

It belongs to the acetylglutamate kinase family. LysZ subfamily.

Its subcellular location is the cytoplasm. It carries out the reaction [amino-group carrier protein]-C-terminal-N-(1,4-dicarboxybutan-1-yl)-L-glutamine + ATP = [amino-group carrier protein]-C-terminal-N-(1-carboxy-5-phosphooxy-5-oxopentan-1-yl)-L-glutamine + ADP. The catalysed reaction is [amino-group carrier protein]-C-terminal-gamma-(L-glutamyl)-L-glutamate + ATP = [amino-group carrier protein]-C-terminal-gamma-(5-phospho-L-glutamyl)-L-glutamate + ADP. The protein operates within amino-acid biosynthesis; L-lysine biosynthesis via AAA pathway; L-lysine from L-alpha-aminoadipate (Thermus route): step 2/5. It participates in amino-acid biosynthesis; L-arginine biosynthesis. In terms of biological role, involved in both the arginine and lysine biosynthetic pathways. Phosphorylates the LysW-bound precursors glutamate (for arginine biosynthesis), respectively alpha-aminoadipate (for lysine biosynthesis). The sequence is that of Putative [LysW]-aminoadipate/[LysW]-glutamate kinase from Caldivirga maquilingensis (strain ATCC 700844 / DSM 13496 / JCM 10307 / IC-167).